The primary structure comprises 130 residues: Cuticle protein 14 isoform b (130 aa).

In terms of domain architecture, Chitin-binding type R&amp;R spans 24–90; the sequence is IGNYNFGYNE…NVHTNEPGTD (67 aa).

In Limulus polyphemus (Atlantic horseshoe crab), this protein is Cuticle protein 14 isoform b.